Consider the following 270-residue polypeptide: Protein tonB2 (270 aa).

Topologically, residues 1 to 51 (MATPQPVDARTQPWRETPGGDLVALGRPVRQALHLVRHNPAQGRVLSRRET) are cytoplasmic. A helical transmembrane segment spans residues 52–69 (ILLVLFALTLHGAVIHWL). The Periplasmic segment spans residues 70 to 270 (SQQRTPALPE…VSVPIDFKLN (201 aa)). Positions 80–187 (VPPQVPPMTI…LTPPSANAGY (108 aa)) are disordered. A compositionally biased stretch (pro residues) spans 94-118 (PAPPVVEPPPPEPLPPVVEEPPPPV). The span at 133-143 (PKPKPKPKPQP) shows a compositional bias: basic residues. The segment covering 144–180 (RPKPAPKAVEPAPPAPPQPAAPPAPPAPAAAPAPLTP) has biased composition (pro residues). The 91-residue stretch at 180-270 (PPSANAGYLH…VSVPIDFKLN (91 aa)) folds into the TonB C-terminal domain.

This sequence belongs to the TonB family. As to quaternary structure, homodimer. Forms a complex with the accessory proteins ExbB and ExbD.

The protein localises to the cell inner membrane. Functionally, interacts with outer membrane receptor proteins that carry out high-affinity binding and energy dependent uptake into the periplasmic space of specific substrates. It could act to transduce energy from the cytoplasmic membrane to specific energy-requiring processes in the outer membrane, resulting in the release into the periplasm of ligands bound by these outer membrane proteins. This Pseudomonas aeruginosa (strain ATCC 15692 / DSM 22644 / CIP 104116 / JCM 14847 / LMG 12228 / 1C / PRS 101 / PAO1) protein is Protein tonB2 (tonB2).